Here is a 396-residue protein sequence, read N- to C-terminus: Protein btn1 (396 aa).

A run of 8 helical transmembrane segments spans residues 15–35 (CFLI…SAAL), 45–65 (GVVL…ASIL), 76–96 (IGFC…SSSV), 138–158 (LAGL…NFSV), 161–181 (TLII…FVLP), 234–254 (FLVY…LLFP), 296–316 (LAIT…LYLT), and 321–341 (FVLF…VNVY).

This sequence belongs to the battenin family.

It localises to the endoplasmic reticulum membrane. It is found in the vacuole membrane. In terms of biological role, involved in vacuolar transport and vacuole pH homeostasis. Also required for cytokinesis. The sequence is that of Protein btn1 from Schizosaccharomyces pombe (strain 972 / ATCC 24843) (Fission yeast).